Here is a 280-residue protein sequence, read N- to C-terminus: MIIDGKRVSEKRLELIKEEIDESGLYPRLATVIAGDNPASLLYVQMKHRACERVHIGSISITLPGDSTTAKVLETIDRLNKDPEINGILVQLPLPAGVDTEQVIEAILPEKDVDGFHPFNLGKLLGGSPTFAPCTPLGIMTLLKEYKIDPAGKRAVVIGRSIDVGRPMAALLINANATVTVCHSRTKDLAAELRKADIIVSAMGKARFITGDMVSGDAVVIDVGINHVDGKLCGDVDFASVSEKVAAITPVPGGVGPMTIATLMENTFKAAKMQSCRTVH.

Residues Gly159–Ser161, Ser184, and Ile225 each bind NADP(+).

Belongs to the tetrahydrofolate dehydrogenase/cyclohydrolase family. Homodimer.

It catalyses the reaction (6R)-5,10-methylene-5,6,7,8-tetrahydrofolate + NADP(+) = (6R)-5,10-methenyltetrahydrofolate + NADPH. It carries out the reaction (6R)-5,10-methenyltetrahydrofolate + H2O = (6R)-10-formyltetrahydrofolate + H(+). It functions in the pathway one-carbon metabolism; tetrahydrofolate interconversion. In terms of biological role, catalyzes the oxidation of 5,10-methylenetetrahydrofolate to 5,10-methenyltetrahydrofolate and then the hydrolysis of 5,10-methenyltetrahydrofolate to 10-formyltetrahydrofolate. The protein is Bifunctional protein FolD of Methanosphaerula palustris (strain ATCC BAA-1556 / DSM 19958 / E1-9c).